The following is a 157-amino-acid chain: Endoribonuclease YbeY (157 aa).

Zn(2+) is bound by residues His-121, His-125, and Asp-131.

The protein belongs to the endoribonuclease YbeY family. Requires Zn(2+) as cofactor.

It is found in the cytoplasm. Its function is as follows. Single strand-specific metallo-endoribonuclease involved in late-stage 70S ribosome quality control and in maturation of the 3' terminus of the 16S rRNA. In Salinibacter ruber (strain DSM 13855 / M31), this protein is Endoribonuclease YbeY.